The following is a 362-amino-acid chain: UDP-N-acetylglucosamine--N-acetylmuramyl-(pentapeptide) pyrophosphoryl-undecaprenol N-acetylglucosamine transferase (362 aa).

Residues 11–13 (TGG), Asn124, Arg163, Ser191, Ile246, and Gln291 each bind UDP-N-acetyl-alpha-D-glucosamine.

Belongs to the glycosyltransferase 28 family. MurG subfamily.

The protein localises to the cell inner membrane. It catalyses the reaction di-trans,octa-cis-undecaprenyl diphospho-N-acetyl-alpha-D-muramoyl-L-alanyl-D-glutamyl-meso-2,6-diaminopimeloyl-D-alanyl-D-alanine + UDP-N-acetyl-alpha-D-glucosamine = di-trans,octa-cis-undecaprenyl diphospho-[N-acetyl-alpha-D-glucosaminyl-(1-&gt;4)]-N-acetyl-alpha-D-muramoyl-L-alanyl-D-glutamyl-meso-2,6-diaminopimeloyl-D-alanyl-D-alanine + UDP + H(+). It participates in cell wall biogenesis; peptidoglycan biosynthesis. Its function is as follows. Cell wall formation. Catalyzes the transfer of a GlcNAc subunit on undecaprenyl-pyrophosphoryl-MurNAc-pentapeptide (lipid intermediate I) to form undecaprenyl-pyrophosphoryl-MurNAc-(pentapeptide)GlcNAc (lipid intermediate II). The polypeptide is UDP-N-acetylglucosamine--N-acetylmuramyl-(pentapeptide) pyrophosphoryl-undecaprenol N-acetylglucosamine transferase (Idiomarina loihiensis (strain ATCC BAA-735 / DSM 15497 / L2-TR)).